A 510-amino-acid polypeptide reads, in one-letter code: NAD(P)H-quinone oxidoreductase subunit 2 B, chloroplastic (510 aa).

14 helical membrane passes run 31 to 51 (FIFP…IDLT), 59 to 79 (WFYF…LFRW), 99 to 119 (IFQF…VEYI), 124 to 144 (MAIT…MFLC), 149 to 169 (LITI…LSGY), 184 to 204 (LLMG…LYGL), 229 to 249 (ISIA…LAPF), 261 to 281 (PTPV…ALAT), 295 to 315 (WHLL…LLAI), 323 to 343 (MLAY…IVGD), 354 to 374 (YMLF…LFGL), 395 to 415 (ALSL…AGFF), 418 to 438 (LYLF…IGLL), and 484 to 504 (MTVC…ILAI).

Belongs to the complex I subunit 2 family. In terms of assembly, NDH is composed of at least 16 different subunits, 5 of which are encoded in the nucleus.

Its subcellular location is the plastid. The protein localises to the chloroplast thylakoid membrane. It catalyses the reaction a plastoquinone + NADH + (n+1) H(+)(in) = a plastoquinol + NAD(+) + n H(+)(out). It carries out the reaction a plastoquinone + NADPH + (n+1) H(+)(in) = a plastoquinol + NADP(+) + n H(+)(out). Functionally, NDH shuttles electrons from NAD(P)H:plastoquinone, via FMN and iron-sulfur (Fe-S) centers, to quinones in the photosynthetic chain and possibly in a chloroplast respiratory chain. The immediate electron acceptor for the enzyme in this species is believed to be plastoquinone. Couples the redox reaction to proton translocation, and thus conserves the redox energy in a proton gradient. This is NAD(P)H-quinone oxidoreductase subunit 2 B, chloroplastic from Hordeum vulgare (Barley).